Here is a 403-residue protein sequence, read N- to C-terminus: Alkaline protease 1 (403 aa).

Residues 1–21 (MQSIKRTLLLLGALLPAALAA) form the signal peptide. Residues 22 to 125 (PAREPHPSSN…QIWYLDALTT (104 aa)) constitute a propeptide that is removed on maturation. The Inhibitor I9 domain maps to 36 to 120 (KYIITFKSGI…HVEEDQIWYL (85 aa)). A Peptidase S8 domain is found at 130–403 (PWGLGSISHK…PNKLAYNGAA (274 aa)). Catalysis depends on charge relay system residues aspartate 162 and histidine 193. N-linked (GlcNAc...) asparagine glycans are attached at residues asparagine 253 and asparagine 307. Serine 349 (charge relay system) is an active-site residue.

It belongs to the peptidase S8 family.

It localises to the secreted. It catalyses the reaction Hydrolysis of proteins with broad specificity, and of Bz-Arg-OEt &gt; Ac-Tyr-OEt. Does not hydrolyze peptide amides.. In terms of biological role, secreted alkaline protease that allows assimilation of proteinaceous substrates. This chain is Alkaline protease 1 (alp1), found in Aspergillus clavatus (strain ATCC 1007 / CBS 513.65 / DSM 816 / NCTC 3887 / NRRL 1 / QM 1276 / 107).